The sequence spans 103 residues: Small ribosomal subunit protein uS10c (103 aa).

This sequence belongs to the universal ribosomal protein uS10 family. As to quaternary structure, part of the 30S ribosomal subunit.

It localises to the plastid. The protein resides in the chloroplast. Its function is as follows. Involved in the binding of tRNA to the ribosomes. The sequence is that of Small ribosomal subunit protein uS10c from Trieres chinensis (Marine centric diatom).